The chain runs to 279 residues: Putative potassium channel regulatory protein (279 aa).

Residues 5 to 74 enclose the BTB domain; that stretch reads ELVTLNVGGM…VRTSQLSLPS (70 aa). Residues 256–279 are disordered; the sequence is ENSRQENYETETVQVKQAKPNKKR.

The protein localises to the endoplasmic reticulum. Inhibits potassium fluxes in cells, possibly by retaining potassium channels in the cytoplasm. The protein is Putative potassium channel regulatory protein (kcnrg) of Xenopus tropicalis (Western clawed frog).